Here is a 557-residue protein sequence, read N- to C-terminus: Protein Red (557 aa).

The tract at residues 1-90 (MPERDSEPFS…YAKLRQQEIE (90 aa)) is disordered. A compositionally biased stretch (basic and acidic residues) spans 16–25 (DGHDVDDPHS). Over residues 42 to 53 (TPRAAPTSAPPS) the composition is skewed to low complexity. An N6-acetyllysine mark is found at Lys-98 and Lys-137. Lys-151 is covalently cross-linked (Glycyl lysine isopeptide (Lys-Gly) (interchain with G-Cter in SUMO2)). A disordered region spans residues 181-205 (KEKEEEELMEKPQKETKKDEDPENK). Ser-287 bears the Phosphoserine mark. The segment covering 294 to 303 (RNKKLKKKDK) has biased composition (basic residues). The interval 294-402 (RNKKLKKKDK…PMDVDKGPGS (109 aa)) is disordered. Basic and acidic residues predominate over residues 304–313 (GKLEEKKPPE). Glycyl lysine isopeptide (Lys-Gly) (interchain with G-Cter in SUMO2) cross-links involve residues Lys-310 and Lys-331. Residues 332–398 (TPRDKERERY…VDDEPMDVDK (67 aa)) are compositionally biased toward basic and acidic residues. 17 repeat units span residues 342–343 (RE), 344–345 (RE), 346–347 (RD), 348–349 (RE), 350–351 (RD), 352–353 (RD), 354–355 (RE), 356–357 (RD), 358–359 (RE), 360–361 (RD), 362–363 (RE), 364–365 (RE), 366–367 (RE), 368–369 (RD), 370–371 (RE), 372–373 (RE), and 374–375 (RE). The tract at residues 342-375 (RERERDRERDRDRERDRERDRERERERDRERERE) is 17 X 2 AA tandem repeats of R-[ED]. Residues Lys-386, Lys-388, Lys-404, and Lys-408 each participate in a glycyl lysine isopeptide (Lys-Gly) (interchain with G-Cter in SUMO2) cross-link. 2 positions are modified to phosphoserine: Ser-417 and Ser-460. Thr-485 bears the Phosphothreonine mark. Residues Lys-496, Lys-501, and Lys-509 each participate in a glycyl lysine isopeptide (Lys-Gly) (interchain with G-Cter in SUMO2) cross-link. Ser-536 carries the post-translational modification Phosphoserine. Glycyl lysine isopeptide (Lys-Gly) (interchain with G-Cter in SUMO2) cross-links involve residues Lys-541, Lys-543, and Lys-553.

It belongs to the RED family. Component of the spliceosome B complex. Interacts with SMU1. Interacts with MAD1L1. May interact with DHX15. As to expression, ubiquitous.

The protein resides in the nucleus. It localises to the nucleoplasm. It is found in the chromosome. Its subcellular location is the cytoplasm. The protein localises to the cytoskeleton. The protein resides in the spindle pole. Its function is as follows. Involved in pre-mRNA splicing as a component of the spliceosome. Auxiliary spliceosomal protein that regulates selection of alternative splice sites in a small set of target pre-mRNA species. Required for normal mitotic cell cycle progression. Recruits MAD1L1 and MAD2L1 to kinetochores, and is required to trigger the spindle assembly checkpoint. Required for normal accumulation of SMU1. The chain is Protein Red (Ik) from Mus musculus (Mouse).